The chain runs to 772 residues: Acyl-homoserine lactone acylase PvdQ (772 aa).

The N-terminal stretch at 1 to 28 is a signal peptide; that stretch reads MPVFPFCRPMTCAGLAAALVAFSVGVQA. A propeptide spans 199 to 220 (spacer peptide); it reads AQSSAGFASALARQERFAAERG. The active-site Nucleophile is S221.

It belongs to the peptidase S45 family. In terms of assembly, heterodimer of an alpha subunit and a beta subunit processed from the same precursor.

It is found in the periplasm. It carries out the reaction an N-acyl-L-homoserine lactone + H2O = L-homoserine lactone + a carboxylate. Catalyzes the deacylation of acyl-homoserine lactone (AHL or acyl-HSL), releasing homoserine lactone (HSL) and the corresponding fatty acid. Possesses a specificity for the degradation of long-chain acyl-HSLs (side chains of 11 to 14 carbons in length). In Pseudomonas putida (strain ATCC 47054 / DSM 6125 / CFBP 8728 / NCIMB 11950 / KT2440), this protein is Acyl-homoserine lactone acylase PvdQ (pvdQ).